The primary structure comprises 150 residues: Putative pre-16S rRNA nuclease (150 aa).

It belongs to the YqgF nuclease family.

It localises to the cytoplasm. In terms of biological role, could be a nuclease involved in processing of the 5'-end of pre-16S rRNA. The polypeptide is Putative pre-16S rRNA nuclease (Chlamydia felis (strain Fe/C-56) (Chlamydophila felis)).